Here is a 168-residue protein sequence, read N- to C-terminus: Thiosulfate dehydrogenase [quinone] small subunit (168 aa).

The chain crosses the membrane as a helical span at residues 6–26; it reads IIGIIFAILVVGWILATGQWA.

In terms of assembly, heterodimer of a large and a small subunit in a 2:2 stoichiometry. TQO may associate with the terminal oxidase formed by doxBCE. In terms of processing, the N-terminus is blocked. Post-translationally, glycosylated.

The protein resides in the cell membrane. It catalyses the reaction 6-decylubiquinone + 2 thiosulfate = 6-decylubiquinol + tetrathionate. With respect to regulation, inhibited by sulfite, metabisulfite and dithonite. Functionally, TQO plays a role in sulfur oxidation and is proposed to couple sulfur oxidation to dioxygen reduction; caldariellaquinone or sulfolobus quinone seem to serve to transfer electrons to the electron transport chain terminal oxidase formed by DoxBCE. The sequence is that of Thiosulfate dehydrogenase [quinone] small subunit (doxA) from Acidianus ambivalens (Desulfurolobus ambivalens).